We begin with the raw amino-acid sequence, 333 residues long: Outer membrane protein assembly factor BamC (333 aa).

A signal peptide spans 1-18 (MKKCLFPLSVLAVIVATG). The N-palmitoyl cysteine moiety is linked to residue C19. A lipid anchor (S-diacylglycerol cysteine) is attached at C19.

Belongs to the BamC family. Part of the Bam complex.

It localises to the cell outer membrane. Its function is as follows. Part of the outer membrane protein assembly complex, which is involved in assembly and insertion of beta-barrel proteins into the outer membrane. The chain is Outer membrane protein assembly factor BamC from Actinobacillus succinogenes (strain ATCC 55618 / DSM 22257 / CCUG 43843 / 130Z).